Consider the following 436-residue polypeptide: GTPase Der (436 aa).

EngA-type G domains lie at 4 to 167 and 175 to 351; these read PTVA…PVEE and IRFS…ESQN. GTP-binding positions include 10-17, 57-61, 119-122, 181-188, 229-233, and 294-297; these read GRPNVGKS, DTGGI, NKVD, DTAGM, and NKWD. The region spanning 352–436 is the KH-like domain; it reads KRIPSAVLND…PIHLIARKRK (85 aa).

Belongs to the TRAFAC class TrmE-Era-EngA-EngB-Septin-like GTPase superfamily. EngA (Der) GTPase family. As to quaternary structure, associates with the 50S ribosomal subunit.

In terms of biological role, GTPase that plays an essential role in the late steps of ribosome biogenesis. The polypeptide is GTPase Der (Streptococcus pyogenes serotype M2 (strain MGAS10270)).